The sequence spans 474 residues: 3-isopropylmalate dehydratase large subunit (474 aa).

Residues Cys-353, Cys-414, and Cys-417 each contribute to the [4Fe-4S] cluster site.

Belongs to the aconitase/IPM isomerase family. LeuC type 1 subfamily. As to quaternary structure, heterodimer of LeuC and LeuD. [4Fe-4S] cluster is required as a cofactor.

The enzyme catalyses (2R,3S)-3-isopropylmalate = (2S)-2-isopropylmalate. It participates in amino-acid biosynthesis; L-leucine biosynthesis; L-leucine from 3-methyl-2-oxobutanoate: step 2/4. Its function is as follows. Catalyzes the isomerization between 2-isopropylmalate and 3-isopropylmalate, via the formation of 2-isopropylmaleate. The sequence is that of 3-isopropylmalate dehydratase large subunit from Teredinibacter turnerae (strain ATCC 39867 / T7901).